Here is a 187-residue protein sequence, read N- to C-terminus: Protein GrpE (187 aa).

The interval 1–26 (MHDPKESLETNIQETESQEKLPETPI) is disordered.

It belongs to the GrpE family. In terms of assembly, homodimer.

The protein localises to the cytoplasm. Functionally, participates actively in the response to hyperosmotic and heat shock by preventing the aggregation of stress-denatured proteins, in association with DnaK and GrpE. It is the nucleotide exchange factor for DnaK and may function as a thermosensor. Unfolded proteins bind initially to DnaJ; upon interaction with the DnaJ-bound protein, DnaK hydrolyzes its bound ATP, resulting in the formation of a stable complex. GrpE releases ADP from DnaK; ATP binding to DnaK triggers the release of the substrate protein, thus completing the reaction cycle. Several rounds of ATP-dependent interactions between DnaJ, DnaK and GrpE are required for fully efficient folding. The polypeptide is Protein GrpE (Dichelobacter nodosus (strain VCS1703A)).